A 194-amino-acid chain; its full sequence is ATP-dependent Clp protease proteolytic subunit (194 aa).

Ser-97 functions as the Nucleophile in the catalytic mechanism. Residue His-122 is part of the active site.

Belongs to the peptidase S14 family. In terms of assembly, fourteen ClpP subunits assemble into 2 heptameric rings which stack back to back to give a disk-like structure with a central cavity, resembling the structure of eukaryotic proteasomes.

The protein resides in the cytoplasm. The enzyme catalyses Hydrolysis of proteins to small peptides in the presence of ATP and magnesium. alpha-casein is the usual test substrate. In the absence of ATP, only oligopeptides shorter than five residues are hydrolyzed (such as succinyl-Leu-Tyr-|-NHMec, and Leu-Tyr-Leu-|-Tyr-Trp, in which cleavage of the -Tyr-|-Leu- and -Tyr-|-Trp bonds also occurs).. Its function is as follows. Cleaves peptides in various proteins in a process that requires ATP hydrolysis. Has a chymotrypsin-like activity. Plays a major role in the degradation of misfolded proteins. The polypeptide is ATP-dependent Clp protease proteolytic subunit (Lactobacillus helveticus (strain DPC 4571)).